The following is a 245-amino-acid chain: 8-amino-3,8-dideoxy-manno-octulosonate cytidylyltransferase (245 aa).

Belongs to the KdsB family.

It is found in the cytoplasm. The catalysed reaction is 8-amino-3,8-dideoxy-alpha-D-manno-octulosonate + CTP = CMP-8-amino-3,8-dideoxy-alpha-D-manno-oct-2-ulosonate + diphosphate. Its pathway is bacterial outer membrane biogenesis; lipopolysaccharide biosynthesis. Its function is as follows. Activates KDO8N (a required 8-carbon sugar) for incorporation into bacterial lipopolysaccharide in the Shewanella genus. This is 8-amino-3,8-dideoxy-manno-octulosonate cytidylyltransferase from Shewanella sediminis (strain HAW-EB3).